Consider the following 333-residue polypeptide: Nucleoid-associated protein YE1421 (333 aa).

This sequence belongs to the YejK family.

The protein resides in the cytoplasm. Its subcellular location is the nucleoid. This Yersinia enterocolitica serotype O:8 / biotype 1B (strain NCTC 13174 / 8081) protein is Nucleoid-associated protein YE1421.